Here is a 308-residue protein sequence, read N- to C-terminus: D-alanine--D-alanine ligase (308 aa).

Residues 108–303 enclose the ATP-grasp domain; it reads KLVWKAAGLP…YEALCLKVLE (196 aa). Residue 134-189 coordinates ATP; sequence EAELGLPMFVKPACEGSSLGVTKVRKAGELAQAYAEARKFDPLVLAEQFVGGGEYT. The Mg(2+) site is built by Asp-257, Glu-270, and Asn-272.

It belongs to the D-alanine--D-alanine ligase family. Mg(2+) serves as cofactor. The cofactor is Mn(2+).

The protein localises to the cytoplasm. It catalyses the reaction 2 D-alanine + ATP = D-alanyl-D-alanine + ADP + phosphate + H(+). It participates in cell wall biogenesis; peptidoglycan biosynthesis. Its function is as follows. Cell wall formation. The sequence is that of D-alanine--D-alanine ligase from Laribacter hongkongensis (strain HLHK9).